Reading from the N-terminus, the 168-residue chain is Type-2 ice-structuring protein (168 aa).

An N-terminal signal peptide occupies residues 1 to 17 (MLTVSLLVCAMMALTQA). A propeptide spanning residues 18 to 34 (DHDGVLKGTATEAGEVS) is cleaved from the precursor. Cystine bridges form between cysteine 45/cysteine 56, cysteine 73/cysteine 163, cysteine 107/cysteine 138, cysteine 127/cysteine 149, and cysteine 139/cysteine 155. The C-type lectin domain occupies 52–164 (HGQRCFYSEA…CPASHASICA (113 aa)).

The protein localises to the secreted. In terms of biological role, has antifreeze activity to protect fish blood from freezing at subzero sea water temperatures. Binds to ice crystals and inhibits their growth. The thermal hysteresis (TH) activity, the ability to lower the blood freezing point, is approximately 0.45 degrees Celsius at 0.15 mM for this protein. The protein is Type-2 ice-structuring protein of Brachyopsis segaliensis (Sea poacher).